The chain runs to 266 residues: DNA damage-regulated autophagy modulator protein 2 (266 aa).

The next 6 membrane-spanning stretches (helical) occupy residues 8 to 28 (LSFL…FSYI), 53 to 73 (KCLF…TIYV), 88 to 108 (IIKL…GLSI), 118 to 138 (FAAH…YMFV), 160 to 180 (LLLV…SSVL), and 207 to 227 (ITTA…LTYI).

This sequence belongs to the DRAM/TMEM150 family. Expression is down-regulated in ovarian tumors (at protein level). Widely expressed with highest levels in placenta and heart. Expressed in the retina. Not detected in brain or thymus.

Its subcellular location is the lysosome membrane. The protein localises to the photoreceptor inner segment. It localises to the apical cell membrane. Its function is as follows. Plays a role in the initiation of autophagy. In the retina, might be involved in the process of photoreceptor cells renewal and recycling to preserve visual function. Induces apoptotic cell death when coexpressed with DRAM1. This Homo sapiens (Human) protein is DNA damage-regulated autophagy modulator protein 2 (DRAM2).